The following is a 30-amino-acid chain: Snaclec coagulation factor IX/factor X-binding protein subunit B (30 aa).

Cys2 and Cys13 are joined by a disulfide. Positions 9–30 constitute a C-type lectin domain; the sequence is YEGHCYRVFTEPQNWADAEKFC.

The protein belongs to the snaclec family. Heterodimer of subunits A and B; disulfide-linked. Post-translationally, glycosylated. Expressed by the venom gland.

The protein localises to the secreted. Its function is as follows. Anticoagulant protein which binds to the gamma-carboxyglutamic acid-domain regions of factors IX (F9) and factor X (F10) in the presence of calcium with a 1 to 1 stoichiometry. The chain is Snaclec coagulation factor IX/factor X-binding protein subunit B from Bothrops jararaca (Jararaca).